The primary structure comprises 229 residues: Flagellar L-ring protein (229 aa).

Positions 1-23 (MLSRLGARALVCLAGVAMLAASG) are cleaved as a signal peptide. The N-palmitoyl cysteine moiety is linked to residue Cys-24. Residue Cys-24 is the site of S-diacylglycerol cysteine attachment.

This sequence belongs to the FlgH family. As to quaternary structure, the basal body constitutes a major portion of the flagellar organelle and consists of four rings (L,P,S, and M) mounted on a central rod.

It is found in the cell outer membrane. It localises to the bacterial flagellum basal body. Assembles around the rod to form the L-ring and probably protects the motor/basal body from shearing forces during rotation. In Cupriavidus taiwanensis (strain DSM 17343 / BCRC 17206 / CCUG 44338 / CIP 107171 / LMG 19424 / R1) (Ralstonia taiwanensis (strain LMG 19424)), this protein is Flagellar L-ring protein.